We begin with the raw amino-acid sequence, 498 residues long: Cytochrome P450 71B5 (498 aa).

The chain crosses the membrane as a helical span at residues 3-23 (IFLCFLLLLPLSLIFLKKLLP). Cys439 provides a ligand contact to heme.

It belongs to the cytochrome P450 family. Heme serves as cofactor.

Its subcellular location is the membrane. This Arabidopsis thaliana (Mouse-ear cress) protein is Cytochrome P450 71B5 (CYP71B5).